The following is a 218-amino-acid chain: Histidine biosynthesis bifunctional protein HisIE (218 aa).

The interval 1–131 is phosphoribosyl-AMP cyclohydrolase; sequence MAPHQFKSKG…GDYDLPPADT (131 aa). The phosphoribosyl-ATP pyrophosphohydrolase stretch occupies residues 132-218; it reads LSQVFRVVEE…VYRALQQRRR (87 aa).

In the N-terminal section; belongs to the PRA-CH family. The protein in the C-terminal section; belongs to the PRA-PH family.

Its subcellular location is the cytoplasm. The enzyme catalyses 1-(5-phospho-beta-D-ribosyl)-ATP + H2O = 1-(5-phospho-beta-D-ribosyl)-5'-AMP + diphosphate + H(+). The catalysed reaction is 1-(5-phospho-beta-D-ribosyl)-5'-AMP + H2O = 1-(5-phospho-beta-D-ribosyl)-5-[(5-phospho-beta-D-ribosylamino)methylideneamino]imidazole-4-carboxamide. The protein operates within amino-acid biosynthesis; L-histidine biosynthesis; L-histidine from 5-phospho-alpha-D-ribose 1-diphosphate: step 2/9. It participates in amino-acid biosynthesis; L-histidine biosynthesis; L-histidine from 5-phospho-alpha-D-ribose 1-diphosphate: step 3/9. The sequence is that of Histidine biosynthesis bifunctional protein HisIE from Gloeobacter violaceus (strain ATCC 29082 / PCC 7421).